The following is a 409-amino-acid chain: Galactosylgalactosylxylosylprotein 3-beta-glucuronosyltransferase S (409 aa).

A disordered region spans residues 1–45 (MSSARLLESQTSDEDNEDIERRPHQSHSRSCSNNTTPTHPPHPMV). Residues 1 to 53 (MSSARLLESQTSDEDNEDIERRPHQSHSRSCSNNTTPTHPPHPMVRKGGVARR) lie on the Cytoplasmic side of the membrane. At Ser-9 the chain carries Phosphoserine. Thr-11 is subject to Phosphothreonine. Ser-12 and Ser-32 each carry phosphoserine. A helical; Signal-anchor for type II membrane protein membrane pass occupies residues 54 to 73 (ICLIGGALFLLLVALCYLTL). The Lumenal portion of the chain corresponds to 74–409 (SGDTRLGGSE…RENPHSKILS (336 aa)). Asn-102 and Asn-223 each carry an N-linked (GlcNAc...) asparagine glycan. Asp-235 contributes to the Mn(2+) binding site. The Proton acceptor role is filled by Glu-318. An N-linked (GlcNAc...) asparagine glycan is attached at Asn-338. The interval 389–409 (EGRNALISKNGRENPHSKILS) is disordered. The segment covering 398-409 (NGRENPHSKILS) has biased composition (basic and acidic residues).

It belongs to the glycosyltransferase 43 family. The cofactor is Mn(2+).

It localises to the golgi apparatus membrane. It carries out the reaction 3-O-(beta-D-galactosyl-(1-&gt;3)-beta-D-galactosyl-(1-&gt;4)-beta-D-xylosyl)-L-seryl-[protein] + UDP-alpha-D-glucuronate = 3-O-(beta-D-GlcA-(1-&gt;3)-beta-D-Gal-(1-&gt;3)-beta-D-Gal-(1-&gt;4)-beta-D-Xyl)-L-seryl-[protein] + UDP + H(+). Its pathway is protein modification; protein glycosylation. In terms of biological role, involved in the biosynthesis of L2/HNK-1 carbohydrate epitope on both glycolipids and glycoproteins. Enzyme has a broad specificity. In Drosophila melanogaster (Fruit fly), this protein is Galactosylgalactosylxylosylprotein 3-beta-glucuronosyltransferase S (GlcAT-S).